The sequence spans 460 residues: Cysteine--tRNA ligase (460 aa).

Residue cysteine 28 coordinates Zn(2+). Residues 30 to 40 (MTVYDYCHLGH) carry the 'HIGH' region motif. The Zn(2+) site is built by cysteine 209, histidine 234, and glutamate 238. The 'KMSKS' region motif lies at 266-270 (KMSKS). Lysine 269 serves as a coordination point for ATP.

The protein belongs to the class-I aminoacyl-tRNA synthetase family. As to quaternary structure, monomer. The cofactor is Zn(2+).

The protein localises to the cytoplasm. The catalysed reaction is tRNA(Cys) + L-cysteine + ATP = L-cysteinyl-tRNA(Cys) + AMP + diphosphate. The chain is Cysteine--tRNA ligase from Pseudomonas paraeruginosa (strain DSM 24068 / PA7) (Pseudomonas aeruginosa (strain PA7)).